A 292-amino-acid polypeptide reads, in one-letter code: Ribosomal protein L11 methyltransferase (292 aa).

The S-adenosyl-L-methionine site is built by T144, G165, D187, and N229.

This sequence belongs to the methyltransferase superfamily. PrmA family.

The protein resides in the cytoplasm. The enzyme catalyses L-lysyl-[protein] + 3 S-adenosyl-L-methionine = N(6),N(6),N(6)-trimethyl-L-lysyl-[protein] + 3 S-adenosyl-L-homocysteine + 3 H(+). Its function is as follows. Methylates ribosomal protein L11. The protein is Ribosomal protein L11 methyltransferase of Pseudomonas putida (strain ATCC 47054 / DSM 6125 / CFBP 8728 / NCIMB 11950 / KT2440).